Consider the following 116-residue polypeptide: U16-barytoxin-Tl1a (116 aa).

Residues 1 to 20 (MKTIIVFLSLLVLATKFGDA) form the signal peptide. Positions 21 to 74 (KEGVNQKQKKEVTQNEFREEYLNEMAAMSLVQQLEAIERALFENEAGRNSRQKR) are excised as a propeptide. Disulfide bonds link C75–C90, C82–C95, and C89–C110.

It belongs to the neurotoxin 14 (magi-1) family. 06 (ICK-Trit) subfamily. Expressed by the venom gland.

The protein resides in the secreted. In terms of biological role, ion channel inhibitor. The polypeptide is U16-barytoxin-Tl1a (Trittame loki (Brush-footed trapdoor spider)).